The sequence spans 166 residues: Phosphopantetheine adenylyltransferase (166 aa).

Position 11 (serine 11) interacts with substrate. ATP is bound by residues 11 to 12 (SF) and histidine 19. Residues lysine 43, alanine 76, and arginine 90 each contribute to the substrate site. ATP contacts are provided by residues 91–93 (GLR), glutamate 101, and 126–132 (MQPISSS).

This sequence belongs to the bacterial CoaD family. Homohexamer. The cofactor is Mg(2+).

It localises to the cytoplasm. The catalysed reaction is (R)-4'-phosphopantetheine + ATP + H(+) = 3'-dephospho-CoA + diphosphate. It participates in cofactor biosynthesis; coenzyme A biosynthesis; CoA from (R)-pantothenate: step 4/5. Functionally, reversibly transfers an adenylyl group from ATP to 4'-phosphopantetheine, yielding dephospho-CoA (dPCoA) and pyrophosphate. The chain is Phosphopantetheine adenylyltransferase from Streptococcus uberis (strain ATCC BAA-854 / 0140J).